A 271-amino-acid chain; its full sequence is Effector CFEM6 (271 aa).

Residues 1-17 (MKYSMITLGAFAMMAVA) form the signal peptide. Residues 18–111 (QLSSLPACGQ…LGPATAVVAS (94 aa)) form the CFEM domain. 4 disulfides stabilise this stretch: cysteine 25–cysteine 68, cysteine 29–cysteine 63, cysteine 42–cysteine 49, and cysteine 51–cysteine 84. Residue aspartate 46 coordinates heme. Serine 247 carries the GPI-anchor amidated serine lipid modification. The propeptide at 248–271 (SAGGARQTAFAGLAAAAGFAAIIL) is removed in mature form.

The protein belongs to the RBT5 family.

Its subcellular location is the cell membrane. It localises to the secreted. The protein localises to the host nucleus. It is found in the host cell membrane. The protein resides in the host chloroplast envelope. In terms of biological role, appears to function during host infection, and may play a role in suppressing the host immune response. The protein is Effector CFEM6 of Marssonina brunnea f. sp. multigermtubi (strain MB_m1) (Marssonina leaf spot fungus).